The sequence spans 268 residues: uncharacterized protein (268 aa).

This is an uncharacterized protein from Acanthamoeba polyphaga mimivirus (APMV).